A 1279-amino-acid polypeptide reads, in one-letter code: Sterol regulatory element-binding protein cleavage-activating protein (1279 aa).

The Cytoplasmic portion of the chain corresponds to 1–18; that stretch reads MTLTERLREKISQAFYNH. The helical transmembrane segment at 19-39 threads the bilayer; sequence GLLCASYPIPIILFTGLCILA. The Lumenal segment spans residues 40–279; sequence CCYPLLKLPL…SLVHVHFKEE (240 aa). Positions 46–284 are loop-1; it reads KLPLPGTGPV…HFKEEIGIAE (239 aa). The segment at 60–81 is disordered; that stretch reads PVKDYSPPPSASDHKPGEPSEQ. N263 is a glycosylation site (N-linked (GlcNAc...) asparagine). Residues 280–300 form a helical membrane-spanning segment; that stretch reads IGIAELIPLVTTYIILFAYIY. In terms of domain architecture, SSD spans 284–442; the sequence is ELIPLVTTYI…MPFFTTVLSI (159 aa). Over 301–312 the chain is Cytoplasmic; it reads FSTRKIDMVKSK. A helical transmembrane segment spans residues 313-333; that stretch reads WGLALAAVVTVLSSLLMSVGL. Topologically, residues 334–344 are lumenal; sequence CTLFGLTPTLN. Residues 345 to 365 form a helical membrane-spanning segment; the sequence is GGEIFPYLVVVIGLENVLVLT. The Cytoplasmic portion of the chain corresponds to 366 to 401; sequence KSVVSTPVDLEVKLRIAQGLSSESWSIMKNMATELG. Residues 402–422 traverse the membrane as a helical segment; the sequence is IILIGYFTLVPAIQEFCLFAV. Residue V423 is a topological domain, lumenal. Residues 424 to 444 form a helical membrane-spanning segment; that stretch reads GLVSDFFLQMPFFTTVLSIDI. The Cytoplasmic segment spans residues 445-518; that stretch reads RRMELADLNK…FLARTRLAQR (74 aa). The ER export signal motif lies at 447–452; that stretch reads MELADL. Glycyl lysine isopeptide (Lys-Gly) (interchain with G-Cter in ubiquitin) cross-links involve residues K454 and K466. Residues 519–539 form a helical membrane-spanning segment; that stretch reads LIMAGTVVWIGILAYTDPAGL. Positions 535-710 are loop-7; it reads DPAGLRTYLA…QAHRDVTLYK (176 aa). The Lumenal portion of the chain corresponds to 540–707; the sequence is RTYLAAQVTE…GVAQAHRDVT (168 aa). Residues 588-617 form a disordered region; that stretch reads LENQTLPGEPPEPGGQAEGVHDSPAPEVTW. N590 and N641 each carry an N-linked (GlcNAc...) asparagine glycan. The tract at residues 668–696 is disordered; it reads EGRHPQDSRSAWSPPQPAQGGLWDAGPKG. A helical transmembrane segment spans residues 708 to 728; the sequence is LYKVAALGLATGILLVLLLCL. Over 729–1279 the chain is Cytoplasmic; it reads YRVLCPRNYG…YVPSVLEKLD (551 aa). The interval 730 to 1279 is interaction with SREBF2; that stretch reads RVLCPRNYGQ…YVPSVLEKLD (550 aa). Residues 770–810 form a WD 1 repeat; sequence VLRGHLMDIECLASDGMLLVSCCLAGHVCVWDAQTGDCLTR. A phosphoserine mark is found at S821, S837, S843, and S850. Disordered regions lie at residues 834 to 868, 883 to 903, and 925 to 959; these read ERLS…LFGD, HPRL…CRRT, and VPMH…GSPS. Positions 885-896 are enriched in basic and acidic residues; it reads RLPELDHPEPRH. Pro residues predominate over residues 929 to 944; it reads TPAPRPPSPGPTPPQT. S936 carries the post-translational modification Phosphoserine. WD repeat units follow at residues 952–1002 and 1005–1042; these read PPEK…LRCS and EVAS…ALSP. An Omega-N-methylarginine modification is found at R1051. 4 WD repeats span residues 1077–1114, 1117–1155, 1158–1195, and 1197–1235; these read AHQK…CLFT, GHSG…RVSH, AHRG…KLYS, and QQDL…LLQT.

This sequence belongs to the WD repeat SCAP family. Membrane region forms a homotetramer. Component of the SCAP-SREBP complex (composed of SCAP and SREBF1/SREBP1 or SREBF2/SREBP2); interacts with SREBF1/SREBP1 or SREBF2/SREBP2 through its C-terminal cytoplasmic domain. Forms a ternary complex with INSIG1 or INSIG2 through its transmembrane domains at high sterol concentrations. Interacts with PAQR3; the interaction anchors the SCAP-SREBP complex to the Golgi apparatus in low cholesterol conditions. Interacts with the SEC23-SEC24 complex in a SAR1-GTP-dependent manner through an ER export signal in its third cytoplasmic loop. Interacts with RNF139; the interaction inhibits the interaction of SCAP with SEC24B and hampering the ER to Golgi transport of the SCAP-SREBP complex. Interacts with SPRING1. Ubiquitinated at Lys-454 and Lys-466. RNF145 triggers ubiquitination of SCAP, likely inhibiting SCAP-SREBP complex transport to the Golgi apparatus and the subsequent processing/maturation of SREBF2/SREBP2. As to expression, widely expressed with higher levels in lung, kidney, gut, brain and adipose tissue. Expressed in liver and muscle. Isoform 3 expressed in testis. In terms of tissue distribution, expressed in testis.

It localises to the endoplasmic reticulum membrane. The protein resides in the golgi apparatus membrane. It is found in the cytoplasmic vesicle. Its subcellular location is the COPII-coated vesicle membrane. Its function is as follows. Escort protein required for cholesterol as well as lipid homeostasis. Regulates export of the SCAP-SREBP complex from the endoplasmic reticulum to the Golgi upon low cholesterol, thereby regulating the processing of sterol regulatory element-binding proteins (SREBPs) SREBF1/SREBP1 and SREBF2/SREBP2. At high sterol concentrations, formation of a ternary complex with INSIG (INSIG1 or INSIG2) leads to mask the ER export signal in SCAP, promoting retention of the complex in the endoplasmic reticulum. Low sterol concentrations trigger release of INSIG, a conformational change in the SSD domain of SCAP, unmasking of the ER export signal, promoting recruitment into COPII-coated vesicles and transport of the SCAP-SREBP to the Golgi: in the Golgi, SREBPs are then processed, releasing the transcription factor fragment of SREBPs from the membrane, its import into the nucleus and up-regulation of LDLR, INSIG1 and the mevalonate pathway. Binds cholesterol via its SSD domain. The chain is Sterol regulatory element-binding protein cleavage-activating protein from Sus scrofa (Pig).